Consider the following 262-residue polypeptide: 14-3-3 protein I (262 aa).

Belongs to the 14-3-3 family. Homodimer. Forms a complex composed of CDPK1, PKA regulatory subunit PKAr and 14-3-3I; the complex is formed in merozoites in response to low extracellular level of K(+) and may play a role in microneme secretion. Interacts with CDPK1 (when phosphorylated) in a Ca(2+)-independent manner; the interaction does not regulate CDPK1 catalytic activity but is required for merozoite invasion of host erythrocytes. Interacts with PKA regulatory subunit PKAr (when phosphorylated) in a Ca(2+)-dependent manner. Interacts with histone H3 (when phosphorylated at 'Ser-28' or when phosphorylated at 'Ser-28' and 'Ser-32').

Its subcellular location is the cell membrane. The protein resides in the cytoplasm. It is found in the nucleus. Its function is as follows. Adapter protein which binds to its partners, usually via a phosphoserine or phosphothreonine motif. Binding generally results in the modulation of the activity and/or cellular localization of the binding partner. Via its interaction with CDPK1 and PKAr, involved in merozoite microneme secretion and thus in merozoite invasion of host erythrocytes. This chain is 14-3-3 protein I, found in Plasmodium falciparum (isolate 3D7).